The chain runs to 398 residues: Histidinol dehydrogenase (398 aa).

NAD(+) contacts are provided by tyrosine 114, glutamine 176, and asparagine 199. Residues threonine 222, glutamine 244, and histidine 247 each coordinate substrate. Residues glutamine 244 and histidine 247 each contribute to the Zn(2+) site. Residues glutamate 298 and histidine 299 each act as proton acceptor in the active site. The substrate site is built by histidine 299, aspartate 331, glutamate 384, and histidine 389. Aspartate 331 contacts Zn(2+). Zn(2+) is bound at residue histidine 389.

Belongs to the histidinol dehydrogenase family. It depends on Zn(2+) as a cofactor.

The catalysed reaction is L-histidinol + 2 NAD(+) + H2O = L-histidine + 2 NADH + 3 H(+). It participates in amino-acid biosynthesis; L-histidine biosynthesis; L-histidine from 5-phospho-alpha-D-ribose 1-diphosphate: step 9/9. Its function is as follows. Catalyzes the sequential NAD-dependent oxidations of L-histidinol to L-histidinaldehyde and then to L-histidine. This is Histidinol dehydrogenase (hisD) from Saccharolobus solfataricus (strain ATCC 35092 / DSM 1617 / JCM 11322 / P2) (Sulfolobus solfataricus).